Here is a 309-residue protein sequence, read N- to C-terminus: Glutaminase (309 aa).

Residues serine 65, asparagine 117, glutamate 162, asparagine 169, tyrosine 193, tyrosine 245, and valine 263 each coordinate substrate.

Belongs to the glutaminase family. As to quaternary structure, homotetramer.

It carries out the reaction L-glutamine + H2O = L-glutamate + NH4(+). The protein is Glutaminase of Bacillus cytotoxicus (strain DSM 22905 / CIP 110041 / 391-98 / NVH 391-98).